A 1028-amino-acid chain; its full sequence is Collagen alpha-1(VI) chain (1028 aa).

The N-terminal stretch at 1–19 (MRAARALLPLLLQACWTAA) is a signal peptide. Positions 20 to 256 (QDEPETPRAV…CCSFECQPAR (237 aa)) are N-terminal globular domain. In terms of domain architecture, VWFA 1 spans 37 to 235 (DLFFVLDTSE…EAISQTIDTI (199 aa)). N-linked (GlcNAc...) asparagine glycosylation is present at asparagine 212. Positions 254–590 (PARGPPGLRG…GPPGHQGPPG (337 aa)) are disordered. Residues 257-592 (GPPGLRGDPG…PGHQGPPGPD (336 aa)) are triple-helical region. The Cell attachment site signature appears at 262-264 (RGD). 2 stretches are compositionally biased toward basic and acidic residues: residues 268–285 (EGERGKPGLPGEKGEAGD) and 301–334 (KGEKGSRGEKGSRGPKGYKGEKGKRGIDGVDGVK). Residues 384 to 394 (RPGSSGPSGDE) show a composition bias toward low complexity. The short motif at 442-444 (RGD) is the Cell attachment site element. The span at 457 to 471 (EGPVGVPGDPGEAGP) shows a compositional bias: low complexity. The short motif at 478–480 (RGD) is the Cell attachment site element. Residues 483-493 (PPGSEGARGAP) show a composition bias toward low complexity. Residues asparagine 516 and asparagine 537 are each glycosylated (N-linked (GlcNAc...) asparagine). The segment covering 550–560 (GEAGDPGDDNN) has biased composition (acidic residues). Over residues 579-590 (PQGPPGHQGPPG) the composition is skewed to pro residues. The C-terminal globular domain stretch occupies residues 593 to 1028 (ECEILDIIMK…QTVSRKVALG (436 aa)). VWFA domains follow at residues 615–805 (DLLF…LKNV) and 829–1021 (DITI…HQTV). N-linked (GlcNAc...) asparagine glycans are attached at residues asparagine 804 and asparagine 896.

The protein belongs to the type VI collagen family. Trimers composed of three different chains: alpha-1(VI), alpha-2(VI), and alpha-3(VI) or alpha-5(VI) or alpha-6(VI). In terms of processing, prolines at the third position of the tripeptide repeating unit (G-X-Y) are hydroxylated in some or all of the chains.

The protein localises to the secreted. The protein resides in the extracellular space. Its subcellular location is the extracellular matrix. Functionally, collagen VI acts as a cell-binding protein. The sequence is that of Collagen alpha-1(VI) chain (COL6A1) from Homo sapiens (Human).